A 72-amino-acid chain; its full sequence is Large ribosomal subunit protein uL29 (72 aa).

It belongs to the universal ribosomal protein uL29 family.

This Chlamydia pneumoniae (Chlamydophila pneumoniae) protein is Large ribosomal subunit protein uL29 (rpmC).